A 169-amino-acid chain; its full sequence is Neurotensin/neuromedin N (169 aa).

An N-terminal signal peptide occupies residues 1 to 22 (MIGMNLQLVCLTLLAFSSWSLC).

Belongs to the neurotensin family. Interacts with NTSR1. Interacts with SORT1. Interacts with SORL1. Neurotensin is cleaved and degraded by Angiotensin-converting enzyme (ACE) and neprilysin (MME).

The protein resides in the secreted. It localises to the cytoplasmic vesicle. The protein localises to the secretory vesicle. Functionally, neurotensin may play an endocrine or paracrine role in the regulation of fat metabolism. It causes contraction of smooth muscle. This Rattus norvegicus (Rat) protein is Neurotensin/neuromedin N (Nts).